The following is a 530-amino-acid chain: Bifunctional purine biosynthesis protein PurH (530 aa).

One can recognise an MGS-like domain in the interval 1–148; it reads MENSRPIKRA…KNHKDVGIVV (148 aa).

The protein belongs to the PurH family.

It catalyses the reaction (6R)-10-formyltetrahydrofolate + 5-amino-1-(5-phospho-beta-D-ribosyl)imidazole-4-carboxamide = 5-formamido-1-(5-phospho-D-ribosyl)imidazole-4-carboxamide + (6S)-5,6,7,8-tetrahydrofolate. The catalysed reaction is IMP + H2O = 5-formamido-1-(5-phospho-D-ribosyl)imidazole-4-carboxamide. The protein operates within purine metabolism; IMP biosynthesis via de novo pathway; 5-formamido-1-(5-phospho-D-ribosyl)imidazole-4-carboxamide from 5-amino-1-(5-phospho-D-ribosyl)imidazole-4-carboxamide (10-formyl THF route): step 1/1. It functions in the pathway purine metabolism; IMP biosynthesis via de novo pathway; IMP from 5-formamido-1-(5-phospho-D-ribosyl)imidazole-4-carboxamide: step 1/1. This is Bifunctional purine biosynthesis protein PurH from Psychromonas ingrahamii (strain DSM 17664 / CCUG 51855 / 37).